Consider the following 109-residue polypeptide: Thiosulfate sulfurtransferase GlpE (109 aa).

The Rhodanese domain occupies 17–105 (KEGKTALVDI…WARSYPQDIT (89 aa)). Cysteine 65 acts as the Cysteine persulfide intermediate in catalysis.

This sequence belongs to the GlpE family.

Its subcellular location is the cytoplasm. It catalyses the reaction thiosulfate + hydrogen cyanide = thiocyanate + sulfite + 2 H(+). It carries out the reaction thiosulfate + [thioredoxin]-dithiol = [thioredoxin]-disulfide + hydrogen sulfide + sulfite + 2 H(+). Functionally, transferase that catalyzes the transfer of sulfur from thiosulfate to thiophilic acceptors such as cyanide or dithiols. May function in a CysM-independent thiosulfate assimilation pathway by catalyzing the conversion of thiosulfate to sulfite, which can then be used for L-cysteine biosynthesis. In Yersinia pestis, this protein is Thiosulfate sulfurtransferase GlpE.